The primary structure comprises 377 residues: Beta sliding clamp (377 aa).

It belongs to the beta sliding clamp family. In terms of assembly, forms a ring-shaped head-to-tail homodimer around DNA which binds and tethers DNA polymerases and other proteins to the DNA. The DNA replisome complex has a single clamp-loading complex (3 tau and 1 each of delta, delta', psi and chi subunits) which binds 3 Pol III cores (1 core on the leading strand and 2 on the lagging strand) each with a beta sliding clamp dimer. Additional proteins in the replisome are other copies of gamma, psi and chi, Ssb, DNA helicase and RNA primase.

Its subcellular location is the cytoplasm. In terms of biological role, confers DNA tethering and processivity to DNA polymerases and other proteins. Acts as a clamp, forming a ring around DNA (a reaction catalyzed by the clamp-loading complex) which diffuses in an ATP-independent manner freely and bidirectionally along dsDNA. Initially characterized for its ability to contact the catalytic subunit of DNA polymerase III (Pol III), a complex, multichain enzyme responsible for most of the replicative synthesis in bacteria; Pol III exhibits 3'-5' exonuclease proofreading activity. The beta chain is required for initiation of replication as well as for processivity of DNA replication. This chain is Beta sliding clamp (dnaN), found in Staphylococcus aureus (strain COL).